The primary structure comprises 233 residues: Histidinol dehydrogenase (233 aa).

Substrate contacts are provided by Ser31, Gln53, and His56. Residues Gln53 and His56 each coordinate Zn(2+). Residues Glu121 and His122 each act as proton acceptor in the active site. Substrate-binding residues include His122, Asp155, Glu209, and His214. Position 155 (Asp155) interacts with Zn(2+). A Zn(2+)-binding site is contributed by His214.

It belongs to the histidinol dehydrogenase family. Zn(2+) is required as a cofactor.

The catalysed reaction is L-histidinol + 2 NAD(+) + H2O = L-histidine + 2 NADH + 3 H(+). It participates in amino-acid biosynthesis; L-histidine biosynthesis; L-histidine from 5-phospho-alpha-D-ribose 1-diphosphate: step 9/9. In terms of biological role, catalyzes the sequential NAD-dependent oxidations of L-histidinol to L-histidinaldehyde and then to L-histidine. The sequence is that of Histidinol dehydrogenase (hisD) from Thiocapsa roseopersicina.